The following is a 352-amino-acid chain: 3'(2'),5'-bisphosphate nucleotidase (352 aa).

Asp-45 (proton acceptor) is an active-site residue. Glu-68, Asp-133, Ile-135, and Asp-136 together coordinate Mg(2+). The active-site Proton acceptor is the Thr-138. Adenosine 3',5'-bisphosphate is bound by residues Thr-138, His-240, Ser-264, Lys-267, Arg-281, and Asp-294. Residues His-240, Ser-264, Lys-267, Arg-281, and Asp-294 each coordinate AMP. Asp-294 contacts Mg(2+).

It belongs to the inositol monophosphatase superfamily. Requires Mg(2+) as cofactor.

The enzyme catalyses 3'-phosphoadenylyl sulfate + H2O = adenosine 5'-phosphosulfate + phosphate. The catalysed reaction is adenosine 3',5'-bisphosphate + H2O = AMP + phosphate. It catalyses the reaction adenosine 2',5'-bisphosphate + H2O = AMP + phosphate. In terms of biological role, phosphatase that converts adenosine 3'-phosphate 5'-phosphosulfate (PAPS) to adenosine 5'-phosphosulfate (APS) and 3'(2')-phosphoadenosine 5'-phosphate (PAP) to AMP. May regulate the flux of sulfur in the sulfur-activation pathway by converting PAPS to APS. Involved in osmoadaptation. This Emericella nidulans (strain FGSC A4 / ATCC 38163 / CBS 112.46 / NRRL 194 / M139) (Aspergillus nidulans) protein is 3'(2'),5'-bisphosphate nucleotidase.